Here is a 142-residue protein sequence, read N- to C-terminus: Large ribosomal subunit protein uL11 (142 aa).

The protein belongs to the universal ribosomal protein uL11 family. In terms of assembly, part of the ribosomal stalk of the 50S ribosomal subunit. Interacts with L10 and the large rRNA to form the base of the stalk. L10 forms an elongated spine to which L12 dimers bind in a sequential fashion forming a multimeric L10(L12)X complex. In terms of processing, one or more lysine residues are methylated.

In terms of biological role, forms part of the ribosomal stalk which helps the ribosome interact with GTP-bound translation factors. The chain is Large ribosomal subunit protein uL11 from Mycobacteroides abscessus (strain ATCC 19977 / DSM 44196 / CCUG 20993 / CIP 104536 / JCM 13569 / NCTC 13031 / TMC 1543 / L948) (Mycobacterium abscessus).